A 537-amino-acid polypeptide reads, in one-letter code: Cryptic loci regulator 2 (537 aa).

The interval 96–116 (VSARHVRPNPKSSKDTLEKQP) is disordered. Basic and acidic residues predominate over residues 107–116 (SSKDTLEKQP).

In terms of assembly, interacts with clr3.

It is found in the nucleus. It localises to the chromosome. The protein localises to the centromere. The protein resides in the telomere. Functionally, required for deacetylation in the mating-type region and the centromere. Acts upstream of the histone deacetylases to promote transcriptional silencing. Required for proper positioning of nucleosomes at heterochromatic loci and for transcriptional gene silencing (TGS) function of the Snf2/Hdac-containing repressor complex (SHREC). The sequence is that of Cryptic loci regulator 2 (clr2) from Schizosaccharomyces pombe (strain 972 / ATCC 24843) (Fission yeast).